The sequence spans 2324 residues: MSNGYRTLSQHLNDLKKENFSLKLRIYFLEERMQQKYEVSREDVYKRNIELKVEVESLKRELQDRKQHLHKTWADEEDLNSQNEAELRRQVEEPQQETEHVYELLDNNIQLLQEESRFAKDEATQMETLVEAEKGCNLELSERWKDATKNREDAPGDQVKLDQYSAALAQRDRRIEELRQSLAAQEGLVEQLSREKQQLLHLLEEPGGMEVQPMPKGLPTQQKPDLNETPTTQPSVSDSHLAELQDKIQQTEVTNKILQEKLNDMSCELRSAQESSQKQDTTIQSLKEMLKSRESETEELYQVIEGQNDTMAKLPEMLHQSQLGQLQSSEGIAPAQQQVALLDLQSALFCSQLEIQKLQRLLRQKERQLADGKRCMQFVEAAAQEREQQKEAAWKHNQELRKALQHLQGELHSKSQQLHVLEAEKYNEIRTQGQNIQHLSHSLSHKEQLIQELQELLQYRDTTDKTLDTNEVFLEKLRQRIQDRAVALERVIDEKFSALEEKDKELRQLRLAVRDRDHDLERLRCVLSANEATMQSMESLLRARGLEVEQLIATCQNLQWLKEELETKFGHWQKEQESIIQQLQTSLHDRNKEVEDLSATLLHKLGPGQSEVAEELCQRLQRKERVLQDLLSDRNKQAMEHEMEVQGLLQSMGTREQERQAVAEKMVQAFMERNSELQALRQYLGGKELMAASQAFISNQPAGATSVGPHHGEQTDQGSTQMPSRDDSTSLTAREEASIPRSTLGDSDTVAGLEKELSNAKEELELMAKKERESQIELSALQSMMAVQEEELQVQAADLESLTRNIQIKEDLIKDLQMQLVDPEDMPAMERLTQEVLLLREKVASVEPQGQEGSENRRQQLLLMLEGLVDERSRLNEALQAERQLYSSLVKFHAQPETFERDRTLQVELEGAQVLRSRLEEVLGRSLERLSRLETLAAIGGATAGDETEDTSTQFTDSIEEEAAHNSHQQLIKVSLEKSLTTMETQNTCLQPPSPVGEDGNRHLQEEMLHLRAEIHQPLEEKRKAEAELKELKAQIEEAGFSSVSHIRNTMLSLCLENAELKEQMGEAMSDGWEVEEDKEKGEVMVETVVAKGGLSEDSLQAEFRKVQGRLKSAYNIINLLKEQLVLRSSEGNTKEMPEFLVRLAREVDRMNMGLPSSEKHQHQEQENMTARPGPRPQSLKLGTALSVDGYQLENKSQAQDSGHQPEFSLPGSTKHLRSQLAQCRQRYQDLQEKLLISEATVFAQANQLEKYRAILSESLVKQDSKQIQVDLQDLGYETCGRSENEAEREETTSPECEEHGNLKPVVLVEGLCSEQGYLDPVLVSSPVKNPWRTSQEARGVQAQGTSDDSSLLRKDIRDLKAQLQNAYKVIQNLRSRVRSLSATSDYSSSLERPRKLRAVATLEGASPHSVTDEDEGLLSDGTGAFYPPGLQAKKNLENLIQRVSQLEAQLPKTGLEGKLAEELKSASWPGKYDSLIQDQARKTVISASENTKREKDLFSSHPTFERYVKSFEDLLRNNDLTTYLGQSFREQLSSRRSVTDRLTSKFSTKDHKSEKEEAGLEPLALRLSRELQEKEKVIEVLQAKLDTRFSSPPSSHAASDSHRSASSTSFLSDDIEACSDMDVASEYTHYEEKKPSPSNSAASASQGLKGEPRSSSISLPTPQNPPKEASQAQPGFHFNSIPKPASLSQAPMHFTVPSFMPFGPSGPPLLGCCETPVVSLAEAQQELQMLQKQLGRSVSIAPPTSTSTLLSNHTEASSPRYSNPAQPHSPARGTIELGRILEPGYLGSGQWDMMRPQKGSISGELSSGSSMYQLNSKPTGADLLEEHLGEIRNLRQRLEESICVNDRLREQLQHRLSSTARENGSTSHFYSQGLESMPQLYNENRALREENQSLQTRLSHASRGHSQEVDHLREALLSSSSQLQELEKELEQQKAERRQLLEDLQEKQDEIVHFREERLSLQENNSRLQHKLALLQQQCEEKQQLSLSLQSELQIYESLYENPKKGLKAFSLDSCYQVPGELSCLVAEIRALRVQLEQSIQVNNRLRLQLEQQMDHGAGKASLSSCPVNQSFSAKAELANQQPPFQGSAASPPVRDVGLNSPPVVLPSNSCSVPGSDSAIISRTNNGSDESAATKTPPKMEVDAADGPFASGHGRHVIGHVDDYDALQQQIGEGKLLIQKILSLTRPARSVPALDAQGTEAPGTKSVHELRSSARALNHSLEESASLLTMFWRAALPNSHGSVLVGEEGNLMEKELLDLRAQVSQQQQLLQSTAVRLKTANQRKKSMEQFIVSHLTRTHDVLKKARTNLEMKSFRALMCTPAL.

Coiled-coil stretches lie at residues 41-132, 158-205, 238-288, and 348-638; these read REDV…LVEA, QVKL…LLEE, DSHL…SLKE, and LFCS…NKQA. Disordered regions lie at residues 72-96 and 205-240; these read TWADEEDLNSQNEAELRRQVEEPQQ and EPGGMEVQPMPKGLPTQQKPDLNETPTTQPSVSDSH. Basic and acidic residues predominate over residues 85 to 96; it reads AELRRQVEEPQQ. The span at 219–238 shows a compositional bias: polar residues; that stretch reads PTQQKPDLNETPTTQPSVSD. The segment at 701–747 is disordered; the sequence is PAGATSVGPHHGEQTDQGSTQMPSRDDSTSLTAREEASIPRSTLGDS. Phosphothreonine is present on Thr705. Positions 724–738 are enriched in basic and acidic residues; that stretch reads SRDDSTSLTAREEAS. Coiled coils occupy residues 745-822, 855-923, and 1011-1043; these read GDSD…QLVD, ENRR…EEVL, and LRAEIHQPLEEKRKAEAELKELKAQIEEAGFSS. Disordered regions lie at residues 1155–1182 and 1195–1216; these read LPSSEKHQHQEQENMTARPGPRPQSLKL and NKSQAQDSGHQPEFSLPGSTKH. 3 coiled-coil regions span residues 1213 to 1241, 1346 to 1384, and 1430 to 1455; these read STKHLRSQLAQCRQRYQDLQEKLLISEAT, TSDDSSLLRKDIRDLKAQLQNAYKVIQNLRSRVRSLSAT, and GLQAKKNLENLIQRVSQLEAQLPKTG. 6 disordered regions span residues 1540-1559, 1589-1610, 1628-1685, 1742-1773, 1857-1877, and 2081-2140; these read TDRLTSKFSTKDHKSEKEEA, RFSSPPSSHAASDSHRSASSTS, YTHY…IPKP, APPTSTSTLLSNHTEASSPRYSNPAQPHSPAR, LSSTARENGSTSHFYSQGLES, and NQQP…TPPK. Positions 1550–1641 constitute an Olduvai domain; it reads KDHKSEKEEA…EEKKPSPSNS (92 aa). Composition is skewed to low complexity over residues 1591–1610 and 1637–1646; these read SSPPSSHAASDSHRSASSTS and SPSNSAASAS. Residues 1743-1767 are compositionally biased toward polar residues; that stretch reads PPTSTSTLLSNHTEASSPRYSNPAQ. Residues 1821–2056 are a coiled coil; sequence GADLLEEHLG…LRLQLEQQMD (236 aa). Composition is skewed to polar residues over residues 2081–2090 and 2108–2135; these read NQQPPFQGSA and PSNSCSVPGSDSAIISRTNNGSDESAAT. The stretch at 2248-2274 forms a coiled coil; it reads EEGNLMEKELLDLRAQVSQQQQLLQST.

As to quaternary structure, interacts with PDE4D. May interact with MAPRE1 and MAPRE3. May form a pericentrosomal complex with AKAP9, CDK5RAP2 and EB1/MAPRE1 in an isoform-specific manner; within this complex, may mediate MAPRE1-binding to CDK5RAP2. Interaction with AKAP9 stabilizes both proteins. May interact with CAMSAP2 in an isoform-specific manner; this interaction is much stronger in the presence of AKAP9. In complex with AKAP9, recruits CAMSAP2 to the Golgi apparatus. May interact with unglycosylated LGALS3BP in an isoform-specific manner; this interaction may connect the pericentrosomal complex to the gamma-tubulin ring complex (gamma-TuRC) to promote microtubule assembly and acetylation. As to expression, abundantly expressed in heart and skeletal muscle and to a lower extent in brain, lung and liver. Expressed in heart, skeletal muscle and testis (at protein level).

It localises to the cytoplasm. The protein resides in the cytoskeleton. Its subcellular location is the microtubule organizing center. It is found in the centrosome. The protein localises to the golgi apparatus. Functions as an anchor sequestering components of the cAMP-dependent pathway to Golgi and/or centrosomes. May participate in microtubule dynamics, promoting microtubule assembly, in an isoform-specific manner. Depending upon the cell context, may act at the level of the Golgi apparatus or that of the centrosome. In complex with AKAP9, recruits CAMSAP2 to the Golgi apparatus and tethers non-centrosomal minus-end microtubules to the Golgi, an important step for polarized cell movement. In complex with AKAP9, EB1/MAPRE1 and CDK5RAP2, contributes to microtubules nucleation and extension from the centrosome to the cell periphery, a crucial process for directed cell migration, mitotic spindle orientation and cell-cycle progression. The sequence is that of Myomegalin (Pde4dip) from Rattus norvegicus (Rat).